The primary structure comprises 392 residues: Vascular endothelial growth factor A, long form (392 aa).

Disordered regions lie at residues 1–44 (MTDR…VEGV) and 73–174 (DKPI…GPGR). Residues 89 to 104 (PGPEKRGEEEKEEERG) show a composition bias toward basic and acidic residues. 2 stretches are compositionally biased toward low complexity: residues 121–143 (AAVC…ASVP) and 158–174 (PRSP…GPGR). Disulfide bonds link cysteine 229–cysteine 271, cysteine 260–cysteine 305, and cysteine 264–cysteine 307. N-linked (GlcNAc...) asparagine glycosylation is present at asparagine 278. Residues 309–320 (PKKDRTKPEKKS) show a composition bias toward basic and acidic residues. The segment at 309-337 (PKKDRTKPEKKSVRGKGKGQKRKRKKSRF) is disordered. Basic residues predominate over residues 321 to 337 (VRGKGKGQKRKRKKSRF).

This sequence belongs to the PDGF/VEGF growth factor family. As to quaternary structure, homodimer; disulfide-linked. Also found as heterodimer with PGF. Interacts with NRP1. Interacts with isoform 2 of BSG. Interacts with CD82; this interaction inhibits VEGFA-mediated signaling pathway. Produced by use of an alternative upstream CUG codon and post-translationally processed into the N-terminal N-VEGF form and the C-terminal secreted VEGFA form. As to expression, in developing embryos, expressed mainly in the choroid plexus, paraventricular neuroepithelium, placenta and kidney glomeruli. Also found in bronchial epithelium, adrenal gland and in seminiferous tubules of testis. High expression continues in kidney glomeruli and choroid plexus in adults.

The protein resides in the cytoplasm. It localises to the nucleus. Its subcellular location is the secreted. It is found in the endoplasmic reticulum. The protein localises to the golgi apparatus. The protein resides in the extracellular space. It localises to the extracellular matrix. Its subcellular location is the cell membrane. Its function is as follows. Participates in the induction of key genes involved in the response to hypoxia and in the induction of angiogenesis such as HIF1A. Involved in protecting cells from hypoxia-mediated cell death. Growth factor active in angiogenesis, vasculogenesis and endothelial cell growth. Induces endothelial cell proliferation, promotes cell migration, inhibits apoptosis and induces permeabilization of blood vessels. Binds to the FLT1/VEGFR1 and KDR/VEGFR2 receptors, heparan sulfate and heparin. Binds to the NRP1/neuropilin-1 receptor. Binding to NRP1 receptor initiates a signaling pathway needed for motor neuron axon guidance and cell body migration, including for the caudal migration of facial motor neurons from rhombomere 4 to rhombomere 6 during embryonic development. Also binds the DEAR/FBXW7-AS1 receptor. May play a role in increasing vascular permeability during lactation, when increased transport of molecules from the blood is required for efficient milk protein synthesis. This chain is Vascular endothelial growth factor A, long form (Vegfa), found in Mus musculus (Mouse).